The chain runs to 474 residues: Cysteine--tRNA ligase (474 aa).

Residue Cys-30 coordinates Zn(2+). A 'HIGH' region motif is present at residues 32–42 (PTVYNYAHIGN). Positions 215, 240, and 244 each coordinate Zn(2+). Residues 272–276 (KMSKS) carry the 'KMSKS' region motif. Position 275 (Lys-275) interacts with ATP.

Belongs to the class-I aminoacyl-tRNA synthetase family. Monomer. Requires Zn(2+) as cofactor.

The protein resides in the cytoplasm. It catalyses the reaction tRNA(Cys) + L-cysteine + ATP = L-cysteinyl-tRNA(Cys) + AMP + diphosphate. In Brachyspira hyodysenteriae (strain ATCC 49526 / WA1), this protein is Cysteine--tRNA ligase.